The chain runs to 216 residues: Somatotropin (216 aa).

The N-terminal stretch at 1–26 (MAAGPRTSVLLAFGLLCLPWPQDVGA) is a signal peptide. Position 45 (H45) interacts with Zn(2+). A disulfide bridge connects residues C78 and C189. S131 carries the post-translational modification Phosphoserine. E198 serves as a coordination point for Zn(2+). A disulfide bridge links C206 with C214.

It belongs to the somatotropin/prolactin family.

Its subcellular location is the secreted. In terms of biological role, plays an important role in growth control. Its major role in stimulating body growth is to stimulate the liver and other tissues to secrete IGF1. It stimulates both the differentiation and proliferation of myoblasts. It also stimulates amino acid uptake and protein synthesis in muscle and other tissues. This chain is Somatotropin (GH1), found in Equus caballus (Horse).